Here is a 94-residue protein sequence, read N- to C-terminus: MSEKTVTETNTDRGFRKTREGLVVSDKMDKTVVVAVEDRVKHALYGKVIRRTNKLKAHDEQNSAGVGDRVLIMETRPLSASKRWRIVEILEKAK.

It belongs to the universal ribosomal protein uS17 family. Part of the 30S ribosomal subunit.

In terms of biological role, one of the primary rRNA binding proteins, it binds specifically to the 5'-end of 16S ribosomal RNA. The chain is Small ribosomal subunit protein uS17 from Streptomyces griseus subsp. griseus (strain JCM 4626 / CBS 651.72 / NBRC 13350 / KCC S-0626 / ISP 5235).